The following is a 364-amino-acid chain: Probable dual-specificity RNA methyltransferase RlmN (364 aa).

Glu-106 functions as the Proton acceptor in the catalytic mechanism. Residues 112–350 (YPQRNTVCIS…SCTVRDTRGR (239 aa)) form the Radical SAM core domain. Residues Cys-119 and Cys-356 are joined by a disulfide bond. 3 residues coordinate [4Fe-4S] cluster: Cys-126, Cys-130, and Cys-133. S-adenosyl-L-methionine contacts are provided by residues 177 to 178 (GE), Ser-211, 234 to 236 (SLH), and Asn-313. Catalysis depends on Cys-356, which acts as the S-methylcysteine intermediate.

The protein belongs to the radical SAM superfamily. RlmN family. The cofactor is [4Fe-4S] cluster.

It is found in the cytoplasm. It catalyses the reaction adenosine(2503) in 23S rRNA + 2 reduced [2Fe-2S]-[ferredoxin] + 2 S-adenosyl-L-methionine = 2-methyladenosine(2503) in 23S rRNA + 5'-deoxyadenosine + L-methionine + 2 oxidized [2Fe-2S]-[ferredoxin] + S-adenosyl-L-homocysteine. It carries out the reaction adenosine(37) in tRNA + 2 reduced [2Fe-2S]-[ferredoxin] + 2 S-adenosyl-L-methionine = 2-methyladenosine(37) in tRNA + 5'-deoxyadenosine + L-methionine + 2 oxidized [2Fe-2S]-[ferredoxin] + S-adenosyl-L-homocysteine. Specifically methylates position 2 of adenine 2503 in 23S rRNA and position 2 of adenine 37 in tRNAs. The protein is Probable dual-specificity RNA methyltransferase RlmN of Mycobacterium marinum (strain ATCC BAA-535 / M).